Here is a 414-residue protein sequence, read N- to C-terminus: 2,3-diketo-5-methylthiopentyl-1-phosphate enolase (414 aa).

Lys-99 serves as the catalytic Proton acceptor. Residues Lys-148, 174-177 (KDDE), His-265, Gly-338, and 360-361 (GG) each bind substrate. Mg(2+)-binding residues include Lys-174, Asp-176, and Glu-177. Residue Lys-174 is modified to N6-carboxylysine.

Belongs to the RuBisCO large chain family. Type IV subfamily. As to quaternary structure, homodimer. Requires Mg(2+) as cofactor.

It catalyses the reaction 5-methylsulfanyl-2,3-dioxopentyl phosphate = 2-hydroxy-5-methylsulfanyl-3-oxopent-1-enyl phosphate. It functions in the pathway amino-acid biosynthesis; L-methionine biosynthesis via salvage pathway; L-methionine from S-methyl-5-thio-alpha-D-ribose 1-phosphate: step 3/6. In terms of biological role, catalyzes the enolization of 2,3-diketo-5-methylthiopentyl-1-phosphate (DK-MTP-1-P) into 2-hydroxy-3-keto-5-methylthiopentenyl-1-phosphate (HK-MTPenyl-1-P). This chain is 2,3-diketo-5-methylthiopentyl-1-phosphate enolase, found in Bacillus cereus (strain Q1).